The following is a 295-amino-acid chain: Non-selective voltage-gated ion channel VDAC2 (295 aa).

ATP is bound by residues Lys-24 and Lys-32. Residue Lys-32 is modified to N6-acetyllysine; alternate. Lys-32 carries the N6-succinyllysine; alternate modification. Lys-32 participates in a covalent cross-link: Glycyl lysine isopeptide (Lys-Gly) (interchain with G-Cter in ubiquitin); alternate. The next 2 beta stranded transmembrane spans lie at 38 to 47 (LVKLDVKTKS) and 51 to 59 (VEFSTSGSS). Glycyl lysine isopeptide (Lys-Gly) (interchain with G-Cter in ubiquitin) cross-links involve residues Lys-65 and Lys-73. A run of 4 beta stranded transmembrane segments spans residues 66–76 (VSGTLETKYKW), 81–88 (LTFTEKWN), 92–101 (TLGTEIAIED), and 107–116 (LKLTFDTTFS). Lys-121 carries the N6-acetyllysine; alternate modification. Lys-121 participates in a covalent cross-link: Glycyl lysine isopeptide (Lys-Gly) (interchain with G-Cter in ubiquitin); alternate. Residues Lys-122 and Lys-125 each participate in a glycyl lysine isopeptide (Lys-Gly) (interchain with G-Cter in ubiquitin) cross-link. A run of 4 beta stranded transmembrane segments spans residues 123-132 (SGKIKSAYKR), 135-142 (INLGCDVD), 149-157 (AIHGSAVFG), and 162-170 (LAGYQMTFD). A Glycyl lysine isopeptide (Lys-Gly) (interchain with G-Cter in ubiquitin) cross-link involves residue Lys-173. Transmembrane regions (beta stranded) follow at residues 175-187 (KLTR…GYRT), 190-197 (FQLHTNVN), 201-210 (EFGGSIYQKV), 214-223 (FDTSVNLAWT), 230-239 (RFGIAAKYQL), and 243-250 (ASISAKVN). Residue Ser-205 is modified to Phosphoserine. Ser-252 is subject to Phosphoserine. Residues 254 to 256 (LIG) and 272 to 276 (SALVD) each bind NAD(+). 2 consecutive transmembrane segments (beta stranded) span residues 254 to 263 (LIGVGYTQTL) and 266 to 275 (GVKLTLSALV). Lys-278 carries the N6-acetyllysine; alternate modification. Residue Lys-278 forms a Glycyl lysine isopeptide (Lys-Gly) (interchain with G-Cter in ubiquitin); alternate linkage. Residues 285 to 294 (HKLGLALELE) traverse the membrane as a beta stranded segment. Lys-286 is covalently cross-linked (Glycyl lysine isopeptide (Lys-Gly) (interchain with G-Cter in ubiquitin)).

It belongs to the eukaryotic mitochondrial porin family. In terms of assembly, monomer, homodimer and higher order oligomers; formation of higher order structures is necessary for scramblase activity. Interacts with ARMC12 in a TBC1D21-dependent manner. Interacts with KLC3. Interacts with SPATA33. Interacts with PPP3CC in a SPATA33-dependent manner. In terms of processing, ubiquitinated by PRKN during mitophagy, leading to its degradation and enhancement of mitophagy. Deubiquitinated by USP30.

The protein resides in the mitochondrion outer membrane. It is found in the membrane. It catalyses the reaction chloride(in) = chloride(out). The catalysed reaction is K(+)(in) = K(+)(out). It carries out the reaction a 1,2-diacyl-sn-glycero-3-phospho-L-serine(in) = a 1,2-diacyl-sn-glycero-3-phospho-L-serine(out). The enzyme catalyses a 1,2-diacyl-sn-glycero-3-phosphocholine(in) = a 1,2-diacyl-sn-glycero-3-phosphocholine(out). It catalyses the reaction a 1,2-diacyl-sn-glycero-3-phospho-(1D-myo-inositol)(in) = a 1,2-diacyl-sn-glycero-3-phospho-(1D-myo-inositol)(out). Its function is as follows. Non-selective voltage-gated ion channel that mediates the transport of anions and cations through the mitochondrion outer membrane and plasma membrane. The channel adopts an open conformation at zero mV and a closed conformation at both positive and negative potentials. There are two populations of channels; the main that functions in a lower open-state conductance with lower ion selectivity, that switch, in a voltage-dependent manner, from the open to a low-conducting 'closed' state and the other that has a normal ion selectivity in the typical high conductance, 'open' state. Binds various lipids, including the sphingolipid ceramide, the phospholipid phosphatidylcholine, and the sterols cholesterol and oxysterol. Binding of ceramide promotes the mitochondrial outer membrane permeabilization (MOMP) apoptotic pathway. Functionally, catalyzes the scrambling of phospholipids across the outer mitochondrial membrane; the mechanism is unrelated to channel activity and is capable of translocating both anionic and zwitterionic phospholipids. In Mesocricetus auratus (Golden hamster), this protein is Non-selective voltage-gated ion channel VDAC2.